A 440-amino-acid polypeptide reads, in one-letter code: Suppressor of cytokine signaling 4 (440 aa).

The span at 1–10 (MAENNENISK) shows a compositional bias: polar residues. The segment at 1–29 (MAENNENISKNVDVRPKTSRSRSADRKDG) is disordered. The span at 12 to 29 (VDVRPKTSRSRSADRKDG) shows a compositional bias: basic and acidic residues. Residues 286–381 (CYWGVMDKYA…FFEPLLSTPL (96 aa)) form the SH2 domain. The region spanning 376–425 (LLSTPLIRTFPFSLQHICRTVICNCTTYDGIDALPIPSSMKLYLKEYHYK) is the SOCS box domain.

It functions in the pathway protein modification; protein ubiquitination. Functionally, SOCS family proteins form part of a classical negative feedback system that regulates cytokine signal transduction. Substrate-recognition component of a SCF-like ECS (Elongin BC-CUL2/5-SOCS-box protein) E3 ubiquitin-protein ligase complex which mediates the ubiquitination and subsequent proteasomal degradation of target proteins. Inhibits EGF signaling by mediating the degradation of the Tyr-phosphorylated EGF receptor/EGFR. This Homo sapiens (Human) protein is Suppressor of cytokine signaling 4 (SOCS4).